We begin with the raw amino-acid sequence, 360 residues long: Zinc metalloproteinase nas-5 (360 aa).

The first 21 residues, 1–21, serve as a signal peptide directing secretion; that stretch reads MDIKQLLLSIILTVSVVNGRG. In terms of domain architecture, Peptidase M12A spans 61–269; sequence NALLSNSPLR…KKVCAIYHCS (209 aa). N-linked (GlcNAc...) asparagine glycosylation occurs at Asn108. Disulfide bonds link Cys111-Cys268 and Cys134-Cys157. Zn(2+) is bound at residue His165. The active site involves Glu166. Positions 169 and 175 each coordinate Zn(2+). The PLAC domain maps to 299-336; the sequence is QGDSCTDRLGICPMLKSREMLNCKVMATFCCSSCSAPT.

Zn(2+) is required as a cofactor.

The protein resides in the secreted. Functionally, metalloprotease. This is Zinc metalloproteinase nas-5 (nas-5) from Caenorhabditis elegans.